Here is a 385-residue protein sequence, read N- to C-terminus: S-adenosylmethionine synthase (385 aa).

Histidine 16 lines the ATP pocket. Residue aspartate 18 participates in Mg(2+) binding. K(+) is bound at residue glutamate 44. The L-methionine site is built by glutamate 57 and glutamine 100. Residues 100 to 110 (QSPDINQGVDR) are flexible loop. ATP is bound by residues 164–166 (DGK), 230–231 (KF), aspartate 239, 245–246 (RK), alanine 262, and lysine 266. Aspartate 239 contributes to the L-methionine binding site. Lysine 270 lines the L-methionine pocket.

Belongs to the AdoMet synthase family. Homotetramer; dimer of dimers. Mg(2+) serves as cofactor. Requires K(+) as cofactor.

The protein localises to the cytoplasm. It catalyses the reaction L-methionine + ATP + H2O = S-adenosyl-L-methionine + phosphate + diphosphate. It functions in the pathway amino-acid biosynthesis; S-adenosyl-L-methionine biosynthesis; S-adenosyl-L-methionine from L-methionine: step 1/1. Functionally, catalyzes the formation of S-adenosylmethionine (AdoMet) from methionine and ATP. The overall synthetic reaction is composed of two sequential steps, AdoMet formation and the subsequent tripolyphosphate hydrolysis which occurs prior to release of AdoMet from the enzyme. The polypeptide is S-adenosylmethionine synthase (Helicobacter pylori (strain G27)).